The following is a 543-amino-acid chain: NXPE family member 4 (543 aa).

Residues 1-26 (MKTLASRKSLWMLLFIVIFWVSFTVF) form the signal peptide. Residues Asn-91, Asn-159, and Asn-223 are each glycosylated (N-linked (GlcNAc...) asparagine).

Belongs to the NXPE family.

Its subcellular location is the secreted. The polypeptide is NXPE family member 4 (Nxpe4) (Mus musculus (Mouse)).